The sequence spans 724 residues: Eukaryotic elongation factor 2 kinase (724 aa).

An N-acetylalanine modification is found at Ala-2. Residues 11–35 (EGVDGGGSSGAGRHGDSDTDSDDDE) are disordered. The span at 13–22 (VDGGGSSGAG) shows a compositional bias: gly residues. A phosphoserine mark is found at Ser-18, Ser-27, Ser-70, and Ser-73. Ser-77 bears the Phosphoserine; by autocatalysis and TRPM7 mark. Residues 80–93 (FKEAWKHAIEKAKH) form a calmodulin-binding region. Residues 115 to 325 (RYNAVTGEWL…ICQSMGLAPF (211 aa)) form the Alpha-type protein kinase domain. Ser-242 is subject to Phosphoserine. 295 to 301 (GDGNLGV) contributes to the ATP binding site. Phosphothreonine is present on Thr-347. The residue at position 352 (Thr-352) is a Phosphothreonine; by autocatalysis. A disordered region spans residues 353 to 476 (EEKCGSPRIR…PESDEDSLGS (124 aa)). Ser-358 carries the phosphoserine; by MAPK13 and CDK1 modification. Positions 364–376 (LSGSRPPLLLRLS) are enriched in low complexity. Residues Ser-365 and Ser-391 each carry the phosphoserine modification. Residues 385-403 (SDVTFDSLPSSPSSATPHS) show a composition bias toward polar residues. Position 397 is a phosphoserine; by AMPK (Ser-397). 2 stretches are compositionally biased toward basic and acidic residues: residues 421–435 (GPRD…RDSE) and 444–468 (SEKR…RRPE). Phosphoserine is present on residues Ser-434, Ser-444, Ser-469, Ser-473, and Ser-476. Ser-499 bears the Phosphoserine; by PKA mark.

Belongs to the protein kinase superfamily. Alpha-type protein kinase family. As to quaternary structure, monomer or homodimer. Interacts with Calmodulin/CALM1; this interaction is strictly required for phosphorylation activity. In terms of processing, the N-terminus is blocked. Post-translationally, autophosphorylated at multiple residues, Thr-347 being the major site. Phosphorylated by AMP-activated protein kinase AMPK at Ser-397 leading to EEF2K activation and protein synthesis inhibition. Phosphorylated by TRPM7 at Ser-77 resulting in improved protein stability, higher EE2F phosphorylated and subsequently reduced rate of protein synthesis. Phosphorylation by other kinases such as CDK1 and MAPK13 at Ser-358 or RPS6KA1 and RPS6KB1 at Ser-365 instead decrease EEF2K activity and promote protein synthesis. Widely expressed, with high levels in reticulocytes and skeletal muscle.

The enzyme catalyses [translation elongation factor 2] + ATP = [translation elongation factor 2]-phosphate + ADP + H(+). Undergoes calcium/calmodulin-dependent intramolecular autophosphorylation, and this results in it becoming partially calcium/calmodulin-independent. In terms of biological role, threonine kinase that regulates protein synthesis by controlling the rate of peptide chain elongation. Upon activation by a variety of upstream kinases including AMPK or TRPM7, phosphorylates the elongation factor EEF2 at a single site, renders it unable to bind ribosomes and thus inactive. In turn, the rate of protein synthesis is reduced. In Rattus norvegicus (Rat), this protein is Eukaryotic elongation factor 2 kinase.